The chain runs to 325 residues: Hydroxylase/desaturase poxK (325 aa).

Residues 1 to 12 show a composition bias toward low complexity; it reads MTATATPVPTVA. Residues 1 to 25 are disordered; that stretch reads MTATATPVPTVASHAQDITLPPPPK.

Belongs to the asaB hydroxylase/desaturase family.

Its pathway is secondary metabolite biosynthesis. Hydroxylase/desaturase; part of the gene cluster that mediates the biosynthesis of oxaleimides, cytotoxic compounds containing an unusual disubstituted succinimide moiety. The first step of the pathway is provided by the HR-PKS poxF that serves in a new mode of collaborative biosynthesis with the PKS-NRPS poxE, by providing the olefin containing amino acid substrate via the synthesis of an ACP-bound dec-4-enoate. The cytochrome P450 monooxygenase poxM-catalyzed oxidation at the alpha-position creates the enzyme-bound 2-hydroxydec-4-enoyl-ACP thioester, which may be prone to spontaneous hydrolysis to yield 2-hydroxydec-4-enoic acid due to increased electrophilicity of the carbonyl. 2-hydroxydec-4-enoic acid can then be further oxidized by poxM to yield the alpha-ketoacid 2-oxodec-4-enoicacid, which is reductively aminated by the aminotransferase poxL to yield (S,E)-2-aminodec-4-enoic acid. The Hybrid PKS-NRPS synthetase poxE then performs condensation between the octaketide product of its PKS modules and the amino group of (S,E)-2-aminodec-4-enoic acid which is activated and incorporated by the adenylation domain. The resulting aminoacyl product can be cyclized by the Diels-Alderase PoxQ and reductively released by the reductive (R) domain of poxE to yield an aldehyde intermediate. The released aldehyde is then substrate for a Knoevenagel condensation by the hydrolyase poxO followed by an oxidation at the 5-position of the pyrrolidone ring. The presence of the olefin from the amino acid building block allows for migration of the substituted allyl group to occur. This allylic transposition reaction takes place in a conjugate addition, semipinacol-like fashion to yield a succinimide intermediate. Iterative two-electron oxidations of the C7 methyl of the succinimide intermediate to the carboxylic acid can be catalyzed by one of two remaining cytochrome P450 monooxygenasess poxC or poxD to yield oxaleimide A. Subsequent oxidation yields the maleimide scaffold oxaleimide I. Both oxaleimide A and oxaleimide I can undergo oxidative modifications in the decalin ring to yield the series of products oxaleimides B to H. The sequence is that of Hydroxylase/desaturase poxK from Penicillium oxalicum (strain 114-2 / CGMCC 5302) (Penicillium decumbens).